The sequence spans 2774 residues: Microtubule-associated protein 1A (2774 aa).

Serine 114, serine 117, serine 118, serine 121, and serine 155 each carry phosphoserine. Position 177 is a phosphotyrosine (tyrosine 177). Residues 310 to 329 are disordered; it reads PSKIKHRADSKESLKAAPKT. 2 positions are modified to phosphoserine: serine 319 and serine 322. The stretch at 336–338 is repeat 1; the sequence is KRE. Residues 336–541 are 11 X 3 AA repeats of K-K-[DE]; sequence KREEVLEEGA…TQDFEELKRE (206 aa). A compositionally biased stretch (basic and acidic residues) spans 342–390; the sequence is EEGAKEARSELAKELAKTEKKAKEPSEKPPEKPSKSERVRGESSEALKA. Disordered regions lie at residues 342–718, 737–808, 845–939, 957–1078, 1093–1344, 1357–1646, 1693–1725, 1739–1843, and 1861–2644; these read EEGA…SFLS, TIPG…TELT, EDQS…VGKE, FGAP…QTGC, ETGE…ILPE, QKDG…SPEQ, ESTF…KDFQ, LAES…VPFS, and AELE…LVNG. A Phosphoserine modification is found at serine 384. Positions 391–406 are enriched in basic residues; the sequence is EKRRLIKDKAGKKHLK. Basic and acidic residues-rich tracts occupy residues 407–464 and 484–500; these read EKIS…KPDL and VKVD…ELSS. A run of 9 repeats spans residues 415 to 417, 420 to 422, 424 to 426, 427 to 429, 431 to 433, 436 to 438, 440 to 442, 444 to 446, and 449 to 451. Residue threonine 504 is modified to Phosphothreonine. A compositionally biased stretch (low complexity) spans 506–516; that stretch reads PAQKGAAPPAA. Phosphoserine is present on residues serine 526 and serine 527. Basic and acidic residues-rich tracts occupy residues 536–554 and 584–595; these read EELK…DTGL and EGEHVEREKEVV. Residues 539–541 form repeat 11; sequence KRE. A phosphoserine mark is found at serine 604 and serine 611. 2 stretches are compositionally biased toward basic and acidic residues: residues 614-631 and 638-675; these read EVEK…REAE and AARE…ETKA. The residue at position 643 (serine 643) is a Phosphoserine. Threonine 663 is subject to Phosphothreonine. 4 positions are modified to phosphoserine: serine 666, serine 677, serine 690, and serine 785. Composition is skewed to polar residues over residues 845–858 and 869–881; these read EDQS…PQTE and TVTS…TEAT. Serine 872, serine 875, serine 876, and serine 889 each carry phosphoserine. Threonine 892 carries the phosphothreonine modification. Phosphoserine is present on residues serine 894, serine 898, serine 907, serine 980, serine 990, serine 998, serine 1007, serine 1013, serine 1022, serine 1029, serine 1037, serine 1061, serine 1132, serine 1134, serine 1148, serine 1160, serine 1178, serine 1188, serine 1191, serine 1197, serine 1206, and serine 1209. Residues 1008–1028 show a composition bias toward basic and acidic residues; sequence PVEDKSEPRDFQEDSWGETKH. The span at 1142–1157 shows a compositional bias: polar residues; sequence SVLSVVSPDTTKQEAT. A compositionally biased stretch (polar residues) spans 1180–1190; the sequence is EDTQSLSFSEE. Positions 1198-1212 are enriched in polar residues; it reads LDISSKQLSPESLGT. A compositionally biased stretch (basic and acidic residues) spans 1220-1236; it reads LGKEERGPVMKAEDDSC. Residues serine 1252, serine 1280, serine 1301, serine 1304, and serine 1307 each carry the phosphoserine modification. A compositionally biased stretch (low complexity) spans 1293–1308; that stretch reads TSDSSLTKSPESLSSP. Composition is skewed to basic and acidic residues over residues 1317 to 1336, 1357 to 1409, 1416 to 1428, 1436 to 1479, and 1487 to 1574; these read WEGK…ETRQ, QKDG…EDQG, AEKD…RDTD, EPRD…EHSI, and RAPD…KADS. Residues serine 1504, serine 1568, serine 1574, and serine 1594 each carry the phosphoserine modification. Over residues 1599–1613 the composition is skewed to basic and acidic residues; that stretch reads SKAREQEKKYWKEQD. Residues serine 1622, serine 1643, serine 1715, serine 1742, serine 1757, serine 1763, and serine 1767 each carry the phosphoserine modification. Residues 1707 to 1718 are compositionally biased toward polar residues; sequence TPLQHTPRSPWT. Threonine 1772 carries the post-translational modification Phosphothreonine. Residues serine 1778 and serine 1784 each carry the phosphoserine modification. Residues 1789–1803 show a composition bias toward polar residues; that stretch reads TESTAPMRNEPTTPS. Over residues 1818–1839 the composition is skewed to pro residues; that stretch reads LPPAPLSPAPAPPTPAPEPHTP. Residues 1873–1885 are compositionally biased toward basic and acidic residues; it reads KDYRKAEGEREGE. Serine 1897 carries the phosphoserine modification. Over residues 1908–1930 the composition is skewed to basic and acidic residues; the sequence is ATRDTEQTEPEQREPTPYPDERS. Threonine 1923 carries the post-translational modification Phosphothreonine. Over residues 1984–1997 the composition is skewed to polar residues; sequence SSPASPQNLQSDTP. Serine 1988 carries the phosphoserine modification. Residues 2008-2034 show a composition bias toward pro residues; that stretch reads AVPPRQEPDPGPNVEPSITPPAVPPRA. Threonine 2026 bears the Phosphothreonine mark. Phosphoserine occurs at positions 2043 and 2077. Residues 2055–2092 show a composition bias toward basic and acidic residues; it reads PDRRTPSPKETGRGHWDDGTNDSDLEKGAREQPEKETR. Low complexity predominate over residues 2115–2125; the sequence is SSLSSDSHLGS. Positions 2144–2153 are enriched in pro residues; that stretch reads PAPPQLPSPA. Serine 2204, serine 2221, serine 2225, serine 2228, serine 2229, and serine 2260 each carry phosphoserine. The span at 2226–2237 shows a compositional bias: polar residues; sequence EGSSSEATTPVI. The segment covering 2271–2287 has biased composition (low complexity); the sequence is DLTPLSPAPSASLDLAP. The segment covering 2288–2298 has biased composition (pro residues); it reads APAPAPAPAPG. The span at 2299–2309 shows a compositional bias: low complexity; sequence LPGDLGDGTLP. Basic and acidic residues predominate over residues 2352 to 2364; it reads AEKEEAEAPHAWE. Serine 2424 is subject to Phosphoserine. Positions 2477–2489 are enriched in low complexity; sequence SASDSGSSQSDSD. A compositionally biased stretch (pro residues) spans 2534–2550; it reads DPPPTPLPDPRPSPPRP. The segment covering 2565–2575 has biased composition (basic and acidic residues); the sequence is GRVERLREKGR. Residues 2613–2623 show a composition bias toward low complexity; the sequence is RTVPRPRSTPS. 2 positions are modified to phosphoserine: serine 2620 and serine 2635.

It belongs to the MAP1 family. In terms of assembly, 3 different light chains, LC1 (a cleavage product of MAP1B), LC2 (a cleavage product of MAP1A) and LC3 (produced by one of the MAP1LC3 genes), can associate with the MAP1A or MAP1B heavy chains. Interacts with guanylate kinase-like domain of DLG1, DLG2 and DLG4. Binds to CSNK1D. Interacts with TIAM2. Interacts with ELAVL4. In terms of processing, phosphorylated by CSNK1D. LC2 is generated from MAP1A by proteolytic processing. It is free to associate with both MAP1A and MAP1B. As to expression, brain, heart and muscle.

Its subcellular location is the cytoplasm. The protein localises to the cytoskeleton. In terms of biological role, structural protein involved in the filamentous cross-bridging between microtubules and other skeletal elements. The polypeptide is Microtubule-associated protein 1A (Map1a) (Rattus norvegicus (Rat)).